The sequence spans 414 residues: L-cysteine:1D-myo-inositol 2-amino-2-deoxy-alpha-D-glucopyranoside ligase (414 aa).

C43 contributes to the Zn(2+) binding site. L-cysteinyl-5'-AMP-binding positions include 43-46 (CGIT), T58, and 81-83 (NVT). A 'HIGH' region motif is present at residues 45–55 (ITPYDATHLGH). Residues 187-192 (ERGGDP) carry the 'ERGGDP' region motif. W227 contacts L-cysteinyl-5'-AMP. A Zn(2+)-binding site is contributed by C231. 249–251 (GSD) is a binding site for L-cysteinyl-5'-AMP. Position 256 (H256) interacts with Zn(2+). I283 is a binding site for L-cysteinyl-5'-AMP. The 'KMSKS' region signature appears at 289–293 (KMSKS).

This sequence belongs to the class-I aminoacyl-tRNA synthetase family. MshC subfamily. As to quaternary structure, monomer. Requires Zn(2+) as cofactor.

The enzyme catalyses 1D-myo-inositol 2-amino-2-deoxy-alpha-D-glucopyranoside + L-cysteine + ATP = 1D-myo-inositol 2-(L-cysteinylamino)-2-deoxy-alpha-D-glucopyranoside + AMP + diphosphate + H(+). In terms of biological role, catalyzes the ATP-dependent condensation of GlcN-Ins and L-cysteine to form L-Cys-GlcN-Ins. This Tsukamurella paurometabola (strain ATCC 8368 / DSM 20162 / CCUG 35730 / CIP 100753 / JCM 10117 / KCTC 9821 / NBRC 16120 / NCIMB 702349 / NCTC 13040) (Corynebacterium paurometabolum) protein is L-cysteine:1D-myo-inositol 2-amino-2-deoxy-alpha-D-glucopyranoside ligase.